The sequence spans 192 residues: UPF0312 protein Avin_03250 (192 aa).

An N-terminal signal peptide occupies residues 1–23 (MLKKTLAALALGSALLGAGQAMA).

Belongs to the UPF0312 family. Type 1 subfamily.

The protein resides in the periplasm. The polypeptide is UPF0312 protein Avin_03250 (Azotobacter vinelandii (strain DJ / ATCC BAA-1303)).